The primary structure comprises 236 residues: Probable ascorbate-specific transmembrane electron transporter 2 (236 aa).

Residues 1-11 lie on the Cytoplasmic side of the membrane; sequence MAAGLGVKAAP. The helical transmembrane segment at 12 to 32 threads the bilayer; sequence FTYVAHALAVAAAVMVLVWCI. The Cytochrome b561 domain maps to 15–219; it reads VAHALAVAAA…FGAAVVVAAV (205 aa). At 33 to 53 the chain is on the extracellular side; sequence SFRGGLAFEADNKNLIFNVHP. Histidine 52 serves as a coordination point for heme b. A helical membrane pass occupies residues 54 to 74; it reads VLMLIGYIILGSEAIMIYKIF. 67 to 75 contacts L-ascorbate; sequence AIMIYKIFP. Over 75–84 the chain is Cytoplasmic; sequence PKLNHDTTKL. The chain crosses the membrane as a helical span at residues 85-105; that stretch reads IHLILHAIAIVLGAVGIYCAF. Positions 86 and 120 each coordinate heme b. Over 106–122 the chain is Extracellular; sequence KFHNESGIANLYSLHSW. Position 116-125 (116-125) interacts with monodehydro-L-ascorbate radical; the sequence is LYSLHSWLGI. Residues 123 to 143 form a helical membrane-spanning segment; the sequence is LGIGTISLYGIQWIFGFVAFF. Residues 144-153 lie on the Cytoplasmic side of the membrane; the sequence is YPGAAPHVRR. Residues 154 to 174 traverse the membrane as a helical segment; the sequence is GALPWHVLFGLFVYVLTLATA. Histidine 159 lines the heme b pocket. Residues 175 to 196 are Extracellular-facing; that stretch reads ELGLLEKLTFLQSSGLDKYGAE. A helical transmembrane segment spans residues 197-217; that stretch reads AFLVNFTGLVVALFGAAVVVA. Residues 218 to 236 are Cytoplasmic-facing; sequence AVAPAHVEEPEGYAPIPVN.

It depends on heme b as a cofactor.

The protein resides in the membrane. Functionally, two-heme-containing cytochrome. Catalyzes ascorbate-dependent trans-membrane electron transfer by utilizing a concerted H(+)/e(-) transfer mechanism. The polypeptide is Probable ascorbate-specific transmembrane electron transporter 2 (Oryza sativa subsp. japonica (Rice)).